We begin with the raw amino-acid sequence, 72 residues long: Translation initiation factor IF-1 (72 aa).

Positions 1–72 constitute an S1-like domain; sequence MAKEKDTIRT…PTRGRIVYRK (72 aa).

The protein belongs to the IF-1 family. As to quaternary structure, component of the 30S ribosomal translation pre-initiation complex which assembles on the 30S ribosome in the order IF-2 and IF-3, IF-1 and N-formylmethionyl-tRNA(fMet); mRNA recruitment can occur at any time during PIC assembly.

Its subcellular location is the cytoplasm. Its function is as follows. One of the essential components for the initiation of protein synthesis. Stabilizes the binding of IF-2 and IF-3 on the 30S subunit to which N-formylmethionyl-tRNA(fMet) subsequently binds. Helps modulate mRNA selection, yielding the 30S pre-initiation complex (PIC). Upon addition of the 50S ribosomal subunit IF-1, IF-2 and IF-3 are released leaving the mature 70S translation initiation complex. The sequence is that of Translation initiation factor IF-1 from Thermus thermophilus (strain ATCC BAA-163 / DSM 7039 / HB27).